A 573-amino-acid polypeptide reads, in one-letter code: Protein FAM200A (573 aa).

The segment at 1-51 is disordered; the sequence is MTPESRDTTDLSPRGTQEMEGIVVVKVEEEDEEDHFQKQRNKVESSPQVLS. The Extracellular segment spans residues 1–513; the sequence is MTPESRDTTD…DEFPLLSRKS (513 aa). A helical transmembrane segment spans residues 514-533; it reads ISLLLPFTTTYLCELGFSIL. The Cytoplasmic segment spans residues 534-573; sequence TRLKTKKRNRLNSAPDMRVALSSCVPDWKELMNRQAHPSH.

This sequence belongs to the FAM200 family.

The protein localises to the membrane. The chain is Protein FAM200A (FAM200A) from Macaca fascicularis (Crab-eating macaque).